A 287-amino-acid polypeptide reads, in one-letter code: Pantothenate synthetase (287 aa).

30-37 (MGALHSGH) serves as a coordination point for ATP. The Proton donor role is filled by histidine 37. Glutamine 61 is a binding site for (R)-pantoate. Beta-alanine is bound at residue glutamine 61. 152-155 (GQKD) is a binding site for ATP. Glutamine 158 serves as a coordination point for (R)-pantoate. Residues isoleucine 181 and 189–192 (ESSR) contribute to the ATP site.

Belongs to the pantothenate synthetase family. Homodimer.

The protein resides in the cytoplasm. The catalysed reaction is (R)-pantoate + beta-alanine + ATP = (R)-pantothenate + AMP + diphosphate + H(+). Its pathway is cofactor biosynthesis; (R)-pantothenate biosynthesis; (R)-pantothenate from (R)-pantoate and beta-alanine: step 1/1. Its function is as follows. Catalyzes the condensation of pantoate with beta-alanine in an ATP-dependent reaction via a pantoyl-adenylate intermediate. In Corynebacterium efficiens (strain DSM 44549 / YS-314 / AJ 12310 / JCM 11189 / NBRC 100395), this protein is Pantothenate synthetase.